Consider the following 237-residue polypeptide: Mitochondrial inner membrane protease atp23 (237 aa).

A compositionally biased stretch (polar residues) spans Met-1–Arg-13. The disordered stretch occupies residues Met-1–Gly-23. An a divalent metal cation-binding site is contributed by His-136. Residue Glu-137 is part of the active site. A divalent metal cation is bound at residue His-140.

This sequence belongs to the peptidase M76 family.

The protein resides in the mitochondrion inner membrane. Functionally, has a dual role in the assembly of mitochondrial ATPase. Acts as a protease that removes N-terminal residues of mitochondrial ATPase CF(0) subunit 6 at the intermembrane space side. Also involved in the correct assembly of the membrane-embedded ATPase CF(0) particle, probably mediating association of subunit 6 with the subunit 9 ring. In Aspergillus fumigatus (strain ATCC MYA-4609 / CBS 101355 / FGSC A1100 / Af293) (Neosartorya fumigata), this protein is Mitochondrial inner membrane protease atp23 (atp23).